A 299-amino-acid chain; its full sequence is Protoheme IX farnesyltransferase 1 (299 aa).

Transmembrane regions (helical) follow at residues 25 to 45 (VVVL…RAGV), 47 to 67 (WSVL…AAVV), 95 to 115 (LPAL…LLAF), 119 to 139 (LTAW…TGFL), 147 to 167 (IVIG…AVSG), 173 to 193 (PLLL…ALAI), 217 to 237 (ALHI…PYAI), 243 to 263 (LYLA…WVLY), and 279 to 299 (IGYL…LLNL).

Belongs to the UbiA prenyltransferase family. Protoheme IX farnesyltransferase subfamily.

It is found in the cell inner membrane. The enzyme catalyses heme b + (2E,6E)-farnesyl diphosphate + H2O = Fe(II)-heme o + diphosphate. It functions in the pathway porphyrin-containing compound metabolism; heme O biosynthesis; heme O from protoheme: step 1/1. Converts heme B (protoheme IX) to heme O by substitution of the vinyl group on carbon 2 of heme B porphyrin ring with a hydroxyethyl farnesyl side group. The polypeptide is Protoheme IX farnesyltransferase 1 (Pseudomonas entomophila (strain L48)).